Reading from the N-terminus, the 363-residue chain is Transcriptional regulator AacuR (363 aa).

Residues Met1–Arg24 form a disordered region. Positions Cys27 to Cys54 form a DNA-binding region, zn(2)-C6 fungal-type. Residues Arg63–His72 show a composition bias toward basic residues. The tract at residues Arg63 to Lys104 is disordered. A compositionally biased stretch (low complexity) spans Ile76–Ser102.

Its subcellular location is the nucleus. Functionally, transcriptional regulator; part of the gene cluster that mediates the biosynthesis of the tetrahydroxanthone dimer secalonic acid D. The chain is Transcriptional regulator AacuR from Aspergillus aculeatus (strain ATCC 16872 / CBS 172.66 / WB 5094).